The following is a 112-amino-acid chain: uncharacterized protein (112 aa).

Positions 39, 105, and 107 each coordinate Fe cation.

Belongs to the HesB/IscA family. Ycf83 subfamily.

It localises to the plastid. The protein localises to the chloroplast. This is an uncharacterized protein from Galdieria sulphuraria (Red alga).